The following is a 311-amino-acid chain: Lipoyl synthase (311 aa).

The [4Fe-4S] cluster site is built by cysteine 47, cysteine 52, cysteine 58, cysteine 73, cysteine 77, cysteine 80, and serine 286. In terms of domain architecture, Radical SAM core spans tryptophan 59–phenylalanine 276.

The protein belongs to the radical SAM superfamily. Lipoyl synthase family. Requires [4Fe-4S] cluster as cofactor.

The protein localises to the cytoplasm. The enzyme catalyses [[Fe-S] cluster scaffold protein carrying a second [4Fe-4S](2+) cluster] + N(6)-octanoyl-L-lysyl-[protein] + 2 oxidized [2Fe-2S]-[ferredoxin] + 2 S-adenosyl-L-methionine + 4 H(+) = [[Fe-S] cluster scaffold protein] + N(6)-[(R)-dihydrolipoyl]-L-lysyl-[protein] + 4 Fe(3+) + 2 hydrogen sulfide + 2 5'-deoxyadenosine + 2 L-methionine + 2 reduced [2Fe-2S]-[ferredoxin]. It participates in protein modification; protein lipoylation via endogenous pathway; protein N(6)-(lipoyl)lysine from octanoyl-[acyl-carrier-protein]: step 2/2. In terms of biological role, catalyzes the radical-mediated insertion of two sulfur atoms into the C-6 and C-8 positions of the octanoyl moiety bound to the lipoyl domains of lipoate-dependent enzymes, thereby converting the octanoylated domains into lipoylated derivatives. The polypeptide is Lipoyl synthase (Chlamydia trachomatis serovar A (strain ATCC VR-571B / DSM 19440 / HAR-13)).